The sequence spans 208 residues: Imidazole glycerol phosphate synthase subunit HisH (208 aa).

The region spanning 2–208 (NVTIVDYNSG…LKIIENFLNL (207 aa)) is the Glutamine amidotransferase type-1 domain. Residue Cys-85 is the Nucleophile of the active site. Catalysis depends on residues His-190 and Glu-192.

Heterodimer of HisH and HisF.

It is found in the cytoplasm. It carries out the reaction 5-[(5-phospho-1-deoxy-D-ribulos-1-ylimino)methylamino]-1-(5-phospho-beta-D-ribosyl)imidazole-4-carboxamide + L-glutamine = D-erythro-1-(imidazol-4-yl)glycerol 3-phosphate + 5-amino-1-(5-phospho-beta-D-ribosyl)imidazole-4-carboxamide + L-glutamate + H(+). The enzyme catalyses L-glutamine + H2O = L-glutamate + NH4(+). The protein operates within amino-acid biosynthesis; L-histidine biosynthesis; L-histidine from 5-phospho-alpha-D-ribose 1-diphosphate: step 5/9. Functionally, IGPS catalyzes the conversion of PRFAR and glutamine to IGP, AICAR and glutamate. The HisH subunit catalyzes the hydrolysis of glutamine to glutamate and ammonia as part of the synthesis of IGP and AICAR. The resulting ammonia molecule is channeled to the active site of HisF. The polypeptide is Imidazole glycerol phosphate synthase subunit HisH (Pelagibacter ubique (strain HTCC1062)).